A 1206-amino-acid polypeptide reads, in one-letter code: Translocase of chloroplast 132, chloroplastic (1206 aa).

Glycine 2 is modified (N-acetylglycine). Residues 13-33 (REDKKLAEDRISDEQVVKNEL) adopt a coiled-coil conformation. Disordered regions lie at residues 33–75 (LVRS…SDDL) and 97–119 (VGDLDETSSNEGGVKDFTAVGES). Over residues 39–49 (VRDDNEDEVFE) the composition is skewed to acidic residues. Serine 195 carries the post-translational modification Phosphoserine. The segment at 233–499 (QTEQEVEEGE…TTTEADEHDE (267 aa)) is disordered. The segment covering 309–324 (AYTSNIVTNASGDNEV) has biased composition (polar residues). The segment covering 325-336 (SSAVTSSPLEES) has biased composition (low complexity). Residues serine 337, serine 363, and serine 398 each carry the phosphoserine modification. Residues 357–379 (LASSPHSYPESTEVHSNSGSPGV) show a composition bias toward polar residues. Positions 403-427 (KELEKQQSSRVHVDPEITENSHVET) are enriched in basic and acidic residues. A compositionally biased stretch (low complexity) spans 430 to 440 (EVVSSVSPTES). The span at 468-492 (APQQSRVNGNGSHNQFQQAEDSTTT) shows a compositional bias: polar residues. The region spanning 572–801 (DFSCTIMVLG…KLQDNIPGRP (230 aa)) is the AIG1-type G domain. Positions 581-588 (GKSGVGKS) are G1. GTP contacts are provided by residues 584–589 (GVGKSA) and 603–608 (DAFQMG). Serine 588 contributes to the Mg(2+) binding site. A homodimerization region spans residues 603–606 (DAFQ). A G2 region spans residues 607–611 (MGTKR). Positions 628–631 (DTPG) are G3. The interval 666–671 (RLDMQS) is homodimerization. The G4 stretch occupies residues 700 to 703 (THAA). GTP-binding positions include histidine 701 and 749 to 750 (EN). The tract at residues 749–751 (ENH) is G5. Residues 824-862 (QPKLPEQQYGDEEDEDDLEESSDSDEESEYDQLPPFKSL) form a disordered region. Positions 832-853 (YGDEEDEDDLEESSDSDEESEY) are enriched in acidic residues. The helical transmembrane segment at 1182–1199 (LAMVAIVPLFKKLLSYYY) threads the bilayer.

Belongs to the TRAFAC class TrmE-Era-EngA-EngB-Septin-like GTPase superfamily. AIG1/Toc34/Toc159-like paraseptin GTPase family. TOC159 subfamily. As to quaternary structure, homodimer. Part of the TOC core complex that includes 1 protein for the specific recognition of transit peptides surrounded by a ring composed of four proteins forming translocation channels, and four to five GTP-binding proteins providing energy. This core complex can interact with components of the TIC complex to form a larger import complex. Chloroplastic protein precursor such as prSS (precursor of the RuBisCO small subunit) interacts with these complexes. The TOC complex contains a specific subset of polar lipids such as digalactosyldiacylglyceride (DGDG), phosphatidylcholine (PC) and phosphatidylglycerol (PG). The cofactor is Mg(2+). Phosphorylated by KOC1. Expressed in seedlings, leaves, flowers, and roots.

The protein resides in the plastid. The protein localises to the chloroplast outer membrane. It localises to the cytoplasm. GTPase involved in protein precursor import into chloroplasts. Seems to recognize chloroplast-destined precursor proteins and regulate their presentation to the translocation channel through GTP hydrolysis. Probably specialized in the import of nuclear encoded non-photosynthetic preproteins from the cytoplasm to the chloroplast. This chain is Translocase of chloroplast 132, chloroplastic, found in Arabidopsis thaliana (Mouse-ear cress).